We begin with the raw amino-acid sequence, 685 residues long: DNA topoisomerase 4 subunit B (685 aa).

Basic and acidic residues predominate over residues 389–400 (EAARKAREESRN). Residues 389-427 (EAARKAREESRNGKKRKKGESLLSGKLTPAQSRNPKKNE) are disordered. In terms of domain architecture, Toprim spans 426-540 (NELYLVEGDS…AGKVYIALPP (115 aa)). Positions 432, 505, and 507 each coordinate Mg(2+). Composition is skewed to acidic residues over residues 644–654 (GSILDRSEEDT) and 673–685 (QTDD…FDIE). The disordered stretch occupies residues 644 to 685 (GSILDRSEEDTSAPTGESLLDAEKTKEAEQTDDTEISLFDIE).

Belongs to the type II topoisomerase family. ParE type 1 subfamily. Heterotetramer composed of ParC and ParE. Mg(2+) serves as cofactor. Requires Mn(2+) as cofactor. It depends on Ca(2+) as a cofactor.

The catalysed reaction is ATP-dependent breakage, passage and rejoining of double-stranded DNA.. With respect to regulation, pyrrolopyrimidines inhibit both GyrB and its paralog in topoisomerase IV (parE). Functionally, topoisomerase IV is essential for chromosome segregation. It relaxes supercoiled DNA. Performs the decatenation events required during the replication of a circular DNA molecule. The sequence is that of DNA topoisomerase 4 subunit B from Enterococcus faecalis (strain ATCC 700802 / V583).